The chain runs to 336 residues: Oxaloacetate decarboxylase (336 aa).

The Pyruvate carboxyltransferase domain occupies 10–258 (PIVLDTTVRD…LAAVDLDRIF (249 aa)). The Mn(2+) site is built by Asp-19, His-197, and His-199.

Belongs to the 4-hydroxy-2-oxovalerate aldolase family. Homodimer. The cofactor is a divalent metal cation.

The enzyme catalyses oxaloacetate + H(+) = pyruvate + CO2. Its activity is regulated as follows. Activity is abolished upon incubation with Chelex and EDTA. Exhibits oxaloacetate decarboxylase activity. Lacks any detectable aldolase activity with 4-hydroxy-2-oxopentanoate (HOPA), 4-hydroxy-2-oxohexanoate (HOHA) or other 4-hydroxy-2-oxoacids. The polypeptide is Oxaloacetate decarboxylase (Mycobacterium tuberculosis (strain ATCC 25618 / H37Rv)).